A 495-amino-acid polypeptide reads, in one-letter code: Maternal protein exuperantia-1 (495 aa).

Disordered stretches follow at residues 197 to 217 and 377 to 495; these read DESANKENEPENVNRNGSSND and TIKP…AATN. Composition is skewed to polar residues over residues 207 to 216 and 398 to 414; these read ENVNRNGSSN and AASSKNGAMSSRSTSTE.

Ensures the proper localization of the mRNA of the bicoid gene to the anterior regions of the oocyte thus playing a fundamental role in the establishment of the polarity of the oocyte. May bind the bcd mRNA. This Drosophila pseudoobscura pseudoobscura (Fruit fly) protein is Maternal protein exuperantia-1 (exu1).